A 73-amino-acid chain; its full sequence is Omega-conotoxin CVID (73 aa).

The N-terminal stretch at 1-22 is a signal peptide; the sequence is MKLTCVVIVAVLLLTACQLITA. Residues 23–45 constitute a propeptide that is removed on maturation; sequence DDSRGTQKHRALRSDTKLSMSTR. 3 disulfides stabilise this stretch: Cys-46–Cys-61, Cys-53–Cys-65, and Cys-60–Cys-72. Cys-72 carries the cysteine amide modification.

The protein belongs to the conotoxin O1 superfamily. Expressed by the venom duct.

The protein localises to the secreted. Omega-conotoxins act at presynaptic membranes, they bind and block voltage-gated calcium channels. This toxin inhibits neurotransmitter release, it blocks N-type calcium channels, probably a N-type (Cav2.2/CACNA1B) calcium channel variant. This chain is Omega-conotoxin CVID, found in Conus catus (Cat cone).